We begin with the raw amino-acid sequence, 144 residues long: Galectin a (144 aa).

A Galectin domain is found at 1 to 138 (DHIDLEFDVG…DAVLRKLCVV (138 aa)).

As to quaternary structure, tetramer.

Lectin that binds beta-galactoside and a wide array of complex carbohydrates. The chain is Galectin a from Aplysina lactuca (Marine sponge).